Consider the following 296-residue polypeptide: Bifunctional protein FolD (296 aa).

Residues 166–168, serine 191, and isoleucine 232 each bind NADP(+); that span reads GRS.

The protein belongs to the tetrahydrofolate dehydrogenase/cyclohydrolase family. In terms of assembly, homodimer.

It catalyses the reaction (6R)-5,10-methylene-5,6,7,8-tetrahydrofolate + NADP(+) = (6R)-5,10-methenyltetrahydrofolate + NADPH. It carries out the reaction (6R)-5,10-methenyltetrahydrofolate + H2O = (6R)-10-formyltetrahydrofolate + H(+). Its pathway is one-carbon metabolism; tetrahydrofolate interconversion. Its function is as follows. Catalyzes the oxidation of 5,10-methylenetetrahydrofolate to 5,10-methenyltetrahydrofolate and then the hydrolysis of 5,10-methenyltetrahydrofolate to 10-formyltetrahydrofolate. This chain is Bifunctional protein FolD, found in Cereibacter sphaeroides (strain ATCC 17029 / ATH 2.4.9) (Rhodobacter sphaeroides).